Here is a 220-residue protein sequence, read N- to C-terminus: Urease accessory protein UreF (220 aa).

This sequence belongs to the UreF family. As to quaternary structure, ureD, UreF and UreG form a complex that acts as a GTP-hydrolysis-dependent molecular chaperone, activating the urease apoprotein by helping to assemble the nickel containing metallocenter of UreC. The UreE protein probably delivers the nickel.

Its subcellular location is the cytoplasm. Its function is as follows. Required for maturation of urease via the functional incorporation of the urease nickel metallocenter. This Bordetella parapertussis (strain 12822 / ATCC BAA-587 / NCTC 13253) protein is Urease accessory protein UreF.